The chain runs to 158 residues: UPF0336 protein Mb0654 (158 aa).

Belongs to the UPF0336 family.

In Mycobacterium bovis (strain ATCC BAA-935 / AF2122/97), this protein is UPF0336 protein Mb0654.